A 186-amino-acid chain; its full sequence is Cell division protein SepF (186 aa).

Disordered regions lie at residues 14 to 59 (EHDE…NETS) and 157 to 186 (GRSQESNETSSSVSSDNFPTWGYETSRLAQ). Residues 16 to 27 (DEYEEDYDEEME) are compositionally biased toward acidic residues. Low complexity predominate over residues 159–171 (SQESNETSSSVSS).

This sequence belongs to the SepF family. As to quaternary structure, homodimer. Interacts with FtsZ.

The protein resides in the cytoplasm. Functionally, cell division protein that is part of the divisome complex and is recruited early to the Z-ring. Probably stimulates Z-ring formation, perhaps through the cross-linking of FtsZ protofilaments. Its function overlaps with FtsA. In Synechocystis sp. (strain ATCC 27184 / PCC 6803 / Kazusa), this protein is Cell division protein SepF.